The following is a 118-amino-acid chain: Protein BEX4 (118 aa).

The interval 14–50 (VEKDKKNKKGGKASKQSEEESHHLEEVENKKPGGNVR) is disordered. Positions 28–44 (KQSEEESHHLEEVENKK) are enriched in basic and acidic residues. Residues 30–88 (SEEESHHLEEVENKKPGGNVRRKVRRLVPNFLWAIPNRHVDHSEGGEEVGRFVGQVMEA) are interaction with SIRT2. Residues 30–118 (SEEESHHLEE…DNHYDFCLIP (89 aa)) form an interaction with alpha-tubulin region. Position 115 (Cys115) interacts with Zn(2+).

This sequence belongs to the BEX family. Interacts with alpha-tubulin. Interacts with SIRT2. In terms of processing, ubiquitinated and degraded by the proteasome.

It localises to the cytoplasm. The protein resides in the cytoskeleton. It is found in the spindle pole. The protein localises to the nucleus. Its function is as follows. May play a role in microtubule deacetylation by negatively regulating the SIRT2 deacetylase activity toward alpha-tubulin and thereby participate in the control of cell cycle progression and genomic stability. In absence of reductive stress, acts as a pseudosubstrate for the CRL2(FEM1B) complex: associates with FEM1B via zinc, thereby preventing association between FEM1B and its substrates. The sequence is that of Protein BEX4 from Rattus norvegicus (Rat).